We begin with the raw amino-acid sequence, 332 residues long: DNA-directed RNA polymerase subunit alpha (332 aa).

The interval M1–T234 is alpha N-terminal domain (alpha-NTD). Residues V248–G332 form an alpha C-terminal domain (alpha-CTD) region.

Belongs to the RNA polymerase alpha chain family. Homodimer. The RNAP catalytic core consists of 2 alpha, 1 beta, 1 beta' and 1 omega subunit. When a sigma factor is associated with the core the holoenzyme is formed, which can initiate transcription.

It carries out the reaction RNA(n) + a ribonucleoside 5'-triphosphate = RNA(n+1) + diphosphate. In terms of biological role, DNA-dependent RNA polymerase catalyzes the transcription of DNA into RNA using the four ribonucleoside triphosphates as substrates. The chain is DNA-directed RNA polymerase subunit alpha from Xylella fastidiosa (strain M23).